The sequence spans 102 residues: ATP synthase subunit c (102 aa).

2 consecutive transmembrane segments (helical) span residues 34–54 and 80–100; these read IGAGVTMIAGSTVGIGQGYIF and AVSESTAIYGLLISFILIFVA.

The protein belongs to the ATPase C chain family. In terms of assembly, F-type ATPases have 2 components, F(1) - the catalytic core - and F(0) - the membrane proton channel. F(1) has five subunits: alpha(3), beta(3), gamma(1), delta(1), epsilon(1). F(0) has three main subunits: a(1), b(2) and c(10-14). The alpha and beta chains form an alternating ring which encloses part of the gamma chain. F(1) is attached to F(0) by a central stalk formed by the gamma and epsilon chains, while a peripheral stalk is formed by the delta and b chains.

The protein localises to the cell membrane. In terms of biological role, f(1)F(0) ATP synthase produces ATP from ADP in the presence of a proton or sodium gradient. F-type ATPases consist of two structural domains, F(1) containing the extramembraneous catalytic core and F(0) containing the membrane proton channel, linked together by a central stalk and a peripheral stalk. During catalysis, ATP synthesis in the catalytic domain of F(1) is coupled via a rotary mechanism of the central stalk subunits to proton translocation. Its function is as follows. Key component of the F(0) channel; it plays a direct role in translocation across the membrane. A homomeric c-ring of between 10-14 subunits forms the central stalk rotor element with the F(1) delta and epsilon subunits. The polypeptide is ATP synthase subunit c (Mycoplasma genitalium (strain ATCC 33530 / DSM 19775 / NCTC 10195 / G37) (Mycoplasmoides genitalium)).